The primary structure comprises 361 residues: Chorismate synthase (361 aa).

An NADP(+)-binding site is contributed by Arg-48. FMN contacts are provided by residues 125–127 (RSS), 238–239 (NA), Gly-278, 293–297 (KPTSS), and Arg-319.

It belongs to the chorismate synthase family. Homotetramer. FMNH2 serves as cofactor.

It catalyses the reaction 5-O-(1-carboxyvinyl)-3-phosphoshikimate = chorismate + phosphate. It participates in metabolic intermediate biosynthesis; chorismate biosynthesis; chorismate from D-erythrose 4-phosphate and phosphoenolpyruvate: step 7/7. Functionally, catalyzes the anti-1,4-elimination of the C-3 phosphate and the C-6 proR hydrogen from 5-enolpyruvylshikimate-3-phosphate (EPSP) to yield chorismate, which is the branch point compound that serves as the starting substrate for the three terminal pathways of aromatic amino acid biosynthesis. This reaction introduces a second double bond into the aromatic ring system. The polypeptide is Chorismate synthase (Aliivibrio fischeri (strain ATCC 700601 / ES114) (Vibrio fischeri)).